The chain runs to 125 residues: Histone H1-like protein HC1 (125 aa).

The protein belongs to the histone H1/H5 family. HCT subfamily.

Its function is as follows. Might have a role analogous to that of eukaryotic histone proteins. The chain is Histone H1-like protein HC1 (hctA) from Chlamydia muridarum (strain MoPn / Nigg).